We begin with the raw amino-acid sequence, 300 residues long: Glucose and ribitol dehydrogenase homolog (300 aa).

A compositionally biased stretch (polar residues) spans 1–14 (MASQQFPPQNQETQ). A disordered region spans residues 1 to 23 (MASQQFPPQNQETQPGKEHAMDP). 44–68 (IVTGGDSGIGRAVCLCFALEGATVA) serves as a coordination point for NAD(+). Position 192 (Ser192) interacts with substrate. The active-site Proton acceptor is the Tyr205.

It belongs to the short-chain dehydrogenases/reductases (SDR) family.

May act as a short alcohol-polyol-sugar dehydrogenase possibly related to carbohydrate metabolism and the acquisition of desiccation tolerance. May also be involved in signal transduction. The chain is Glucose and ribitol dehydrogenase homolog from Oryza sativa subsp. japonica (Rice).